The chain runs to 441 residues: Amino-acid acetyltransferase (441 aa).

The 140-residue stretch at 295 to 434 (EQVRRATIND…QELYNYQRRS (140 aa)) folds into the N-acetyltransferase domain.

The protein belongs to the acetyltransferase family. ArgA subfamily. As to quaternary structure, homohexamer.

Its subcellular location is the cytoplasm. It catalyses the reaction L-glutamate + acetyl-CoA = N-acetyl-L-glutamate + CoA + H(+). The protein operates within amino-acid biosynthesis; L-arginine biosynthesis; N(2)-acetyl-L-ornithine from L-glutamate: step 1/4. The protein is Amino-acid acetyltransferase of Yersinia pseudotuberculosis serotype O:1b (strain IP 31758).